Consider the following 500-residue polypeptide: MKAFKQKQVWFITGSQDLYGPKVLEQVAKNSEQIVHGFNESSAISIEVVYKPTVKSPREIHAVCQAANSDENCVGVILWMHTFSPAKMWIAGLNELSKPFMHLHTQFNAELPWSEINMNYMNTHQSAHGCREFGFIGTRMRKERKVVVGHWQSSDVQAQIDDWCRAAAGWHESQNLRIARFGDNMRQVAVTEGDKVAAQIQFGYEVHAYSLGELNEAIADIAEGDVTAQLDRYASEYQVGNELFGDEYQLDRLRKEAKIELGLTQFLTQGGFGAFTNCFENLTGMTGLPGLATQRLMANGFGYGGEGDWKTAAMVRIMKVMGQGRAGGTSFMEDYTYNFGATDQVLGAHMLEVCPSIAAAKPRLEVHRHTIGVRCDVPRLLFTGKAGPAINVSTIDLGNRFRIILNELDTVTPPQDLPNLPVASALWEPRPNLAVAAAAWIHAGGAHHSAYSQAITTDQIVDFAEMAGAELVIIDADTKIREFKNELRQNSVYYGLARGL.

Residues glutamate 306, glutamate 333, histidine 349, and histidine 448 each coordinate Mn(2+).

Belongs to the arabinose isomerase family. Requires Mn(2+) as cofactor.

The catalysed reaction is beta-L-arabinopyranose = L-ribulose. The protein operates within carbohydrate degradation; L-arabinose degradation via L-ribulose; D-xylulose 5-phosphate from L-arabinose (bacterial route): step 1/3. Functionally, catalyzes the conversion of L-arabinose to L-ribulose. This Shewanella sp. (strain ANA-3) protein is L-arabinose isomerase.